A 325-amino-acid chain; its full sequence is MTRRNEKEEVPPQGKILDLFHPGIAPYAELMRIHRLLGFYLNTSPYLVGVAFSASISSTKIPIAVLLHRAMLLSIWSIFLRSAGCVWDDLIDMDLDSQISRTKSRPLPRGAVSPSNALLLTVALFACGGTVLIFLPWACTVDCLIVTFFALSYPFGKRFTDYPQITLMNIGWAVPMAMHSLGLDPLSQMTPTVCMFLFIGSVIIMIDVIYSRQDTEEDLKVGVKSMAVRFRDSIQLLSYSLLCASTGFLAMAGVLTGLGLPFFVLSVGGHFCGFWVLLRATQVGKSSGVESYAKYNMPKQAFRPRPETSCATWLLSTSRNEMGRA.

The next 7 helical transmembrane spans lie at 47–67, 71–91, 117–137, 163–183, 189–209, 236–256, and 258–278; these read LVGV…AVLL, MLLS…DDLI, ALLL…FLPW, PQIT…SLGL, MTPT…IDVI, LLSY…GVLT, and LGLP…WVLL.

The protein belongs to the UbiA prenyltransferase family. The cofactor is Mg(2+).

It is found in the membrane. It catalyses the reaction 3,5-dimethylorsellinate + (2E,6E)-farnesyl diphosphate = (3R)-3-farnesyl-6-hydroxy-2,3,5-trimethyl-4-oxocyclohexa-1,5-diene-1-carboxylate + diphosphate + H(+). Its pathway is secondary metabolite biosynthesis; terpenoid biosynthesis. Functionally, prenytransferase; part of the gene cluster that mediates the biosynthesis of andrastins, meroterpenoid compounds that exhibit inhibitory activity against ras farnesyltransferase, suggesting that they could be promising leads for antitumor agents. The first step of the pathway is the synthesis of 3,5-dimethylorsellinic acid (DMOA) by the polyketide synthase adrD via condensation of one acetyl-CoA starter unit with 3 malonyl-CoA units and 2 methylations. DMAO is then converted to farnesyl-DMAO by the prenyltransferase adrG. The methyltransferase adrK catalyzes the methylation of the carboxyl group of farnesyl-DMAO to farnesyl-DMAO methyl ester which is further converted to epoxyfarnesyl-DMAO methyl ester by the FAD-dependent monooxygenase adrH. The terpene cyclase adrI then catalyzes the carbon skeletal rearrangement to generate the andrastin E, the first compound in the pathway having the andrastin scaffold, with the tetracyclic ring system. The post-cyclization tailoring enzymes adrF, adrE, adrJ, and adrA, are involved in the conversion of andrastin E into andrastin A. The short chain dehydrogenase adrF is responsible for the oxidation of the C-3 a hydroxyl group of andrastin E to yield the corresponding ketone, andrastin D. The ketoreductase adrE stereoselectively reduces the carbonyl moiety to reverse the stereochemistry of the C-3 position to yield andrastin F. The acetyltransferase adrJ is the acetyltransferase that attaches the acetyl group to the C-3 hydroxyl group of andrastin F to yield andrastin C. Finally, the cytochrome P450 monooxygenase adrA catalyzes two sequential oxidation reactions of the C-23 methyl group, to generate the corresponding alcohol andrastin B, and aldehyde andrastin A. This is Prenytransferase adrG from Penicillium rubens (strain ATCC 28089 / DSM 1075 / NRRL 1951 / Wisconsin 54-1255) (Penicillium chrysogenum).